The sequence spans 265 residues: 5'-nucleotidase SurE (265 aa).

Residues Asp12, Asp13, Ser43, and Asn91 each contribute to the a divalent metal cation site.

It belongs to the SurE nucleotidase family. A divalent metal cation serves as cofactor.

Its subcellular location is the cytoplasm. The catalysed reaction is a ribonucleoside 5'-phosphate + H2O = a ribonucleoside + phosphate. Its function is as follows. Nucleotidase that shows phosphatase activity on nucleoside 5'-monophosphates. The protein is 5'-nucleotidase SurE of Haloquadratum walsbyi (strain DSM 16790 / HBSQ001).